Here is a 129-residue protein sequence, read N- to C-terminus: Small ribosomal subunit protein eS6 (129 aa).

The interval Gln106–Glu129 is disordered.

It belongs to the eukaryotic ribosomal protein eS6 family.

This chain is Small ribosomal subunit protein eS6, found in Natronomonas pharaonis (strain ATCC 35678 / DSM 2160 / CIP 103997 / JCM 8858 / NBRC 14720 / NCIMB 2260 / Gabara) (Halobacterium pharaonis).